Here is a 450-residue protein sequence, read N- to C-terminus: Alpha-2B adrenergic receptor (450 aa).

Topologically, residues 1–12 are extracellular; it reads MDHQDPYSVQAT. Residues 13 to 38 form a helical membrane-spanning segment; sequence AAIAAAITFLILFTIFGNALVILAVL. The Cytoplasmic portion of the chain corresponds to 39–48; the sequence is TSRSLRAPQN. The chain crosses the membrane as a helical span at residues 49–69; sequence LFLVSLAAADILVATLIIPFS. Residues 70-86 are Extracellular-facing; that stretch reads LANELLGYWYFRRTWCE. Cysteines 85 and 164 form a disulfide. A helical transmembrane segment spans residues 87 to 107; sequence VYLALDVLFCTSSIVHLCAIS. At 108–128 the chain is on the cytoplasmic side; the sequence is LDRYWAVSRALEYNSKRTPRR. A helical membrane pass occupies residues 129–149; the sequence is IKCIILTVWLIAAVISLPPLI. At 150–172 the chain is on the extracellular side; that stretch reads YKGDQGPQPRGRPQCKLNQEAWY. A helical transmembrane segment spans residues 173–193; sequence ILASSIGSFFAPCLIMILVYL. Residues 194–368 are Cytoplasmic-facing; sequence RIYLIAKRSN…RRAQLTREKR (175 aa). Disordered stretches follow at residues 204–229 and 241–329; these read RRGP…GGAL and ASAR…PLQQ. Over residues 246–256 the composition is skewed to basic and acidic residues; sequence VNGHSKSTGEK. Positions 293–311 are enriched in acidic residues; that stretch reads PEDEAEEEEEEEEEEEECE. The segment covering 312 to 326 has biased composition (low complexity); sequence PQAVPVSPASACSPP. The chain crosses the membrane as a helical span at residues 369–389; the sequence is FTFVLAVVIGVFVLCWFPFFF. Over 390 to 405 the chain is Extracellular; sequence SYSLGAICPKHCKVPH. The helical transmembrane segment at 406–426 threads the bilayer; the sequence is GLFQFFFWIGYCNSSLNPVIY. Topologically, residues 427 to 450 are cytoplasmic; sequence TIFNQDFRRAFRRILCRPWTQTAW. Residue cysteine 442 is the site of S-palmitoyl cysteine attachment.

This sequence belongs to the G-protein coupled receptor 1 family. Adrenergic receptor subfamily. ADRA2B sub-subfamily. As to quaternary structure, interacts with RAB26. Interacts with PPP1R9B. Interacts with GGA1, GGA2 and GGA3.

It is found in the cell membrane. Its function is as follows. Alpha-2 adrenergic receptors mediate the catecholamine-induced inhibition of adenylate cyclase through the action of G proteins. The rank order of potency for agonists of this receptor is clonidine &gt; norepinephrine &gt; epinephrine = oxymetazoline &gt; dopamine &gt; p-tyramine = phenylephrine &gt; serotonin &gt; p-synephrine / p-octopamine. For antagonists, the rank order is yohimbine &gt; chlorpromazine &gt; phentolamine &gt; mianserine &gt; spiperone &gt; prazosin &gt; alprenolol &gt; propanolol &gt; pindolol. This Homo sapiens (Human) protein is Alpha-2B adrenergic receptor (ADRA2B).